The primary structure comprises 213 residues: Na(+)-translocating NADH-quinone reductase subunit D (213 aa).

7 consecutive transmembrane segments (helical) span residues A14–V34, L42–L62, I77–I97, L101–M121, F131–I151, L154–A174, and L183–V203.

The protein belongs to the NqrDE/RnfAE family. As to quaternary structure, composed of six subunits; NqrA, NqrB, NqrC, NqrD, NqrE and NqrF.

The protein localises to the cell inner membrane. It catalyses the reaction a ubiquinone + n Na(+)(in) + NADH + H(+) = a ubiquinol + n Na(+)(out) + NAD(+). In terms of biological role, NQR complex catalyzes the reduction of ubiquinone-1 to ubiquinol by two successive reactions, coupled with the transport of Na(+) ions from the cytoplasm to the periplasm. NqrA to NqrE are probably involved in the second step, the conversion of ubisemiquinone to ubiquinol. This chain is Na(+)-translocating NADH-quinone reductase subunit D, found in Chlamydia muridarum (strain MoPn / Nigg).